The following is a 145-amino-acid chain: Lipoprotein signal peptidase (145 aa).

The next 3 membrane-spanning stretches (helical) occupy residues 1–21 (MVYI…LLVM), 57–77 (YLFI…YYKT), and 79–99 (GSGM…GNLI). Residues D109 and D123 contribute to the active site. The chain crosses the membrane as a helical span at residues 115–135 (IWPVFNLADSSVVIGAALLIL).

The protein belongs to the peptidase A8 family.

The protein resides in the cell inner membrane. It catalyses the reaction Release of signal peptides from bacterial membrane prolipoproteins. Hydrolyzes -Xaa-Yaa-Zaa-|-(S,diacylglyceryl)Cys-, in which Xaa is hydrophobic (preferably Leu), and Yaa (Ala or Ser) and Zaa (Gly or Ala) have small, neutral side chains.. It functions in the pathway protein modification; lipoprotein biosynthesis (signal peptide cleavage). This protein specifically catalyzes the removal of signal peptides from prolipoproteins. In Halothermothrix orenii (strain H 168 / OCM 544 / DSM 9562), this protein is Lipoprotein signal peptidase.